The chain runs to 478 residues: tRNA-2-methylthio-N(6)-dimethylallyladenosine synthase (478 aa).

The MTTase N-terminal domain occupies 39 to 157; that stretch reads KLVFTQTFGC…FPQLLTESIN (119 aa). [4Fe-4S] cluster contacts are provided by Cys-48, Cys-84, Cys-118, Cys-194, Cys-198, and Cys-201. One can recognise a Radical SAM core domain in the interval 180-410; sequence RKFELKAFVN…LEAVNRISAE (231 aa). Positions 410-477 constitute a TRAM domain; the sequence is EINDGYKDRI…TFSLNGILVN (68 aa).

The protein belongs to the methylthiotransferase family. MiaB subfamily. Monomer. It depends on [4Fe-4S] cluster as a cofactor.

The protein resides in the cytoplasm. It catalyses the reaction N(6)-dimethylallyladenosine(37) in tRNA + (sulfur carrier)-SH + AH2 + 2 S-adenosyl-L-methionine = 2-methylsulfanyl-N(6)-dimethylallyladenosine(37) in tRNA + (sulfur carrier)-H + 5'-deoxyadenosine + L-methionine + A + S-adenosyl-L-homocysteine + 2 H(+). In terms of biological role, catalyzes the methylthiolation of N6-(dimethylallyl)adenosine (i(6)A), leading to the formation of 2-methylthio-N6-(dimethylallyl)adenosine (ms(2)i(6)A) at position 37 in tRNAs that read codons beginning with uridine. This chain is tRNA-2-methylthio-N(6)-dimethylallyladenosine synthase, found in Clostridioides difficile (strain 630) (Peptoclostridium difficile).